Consider the following 290-residue polypeptide: Homeobox protein EMX1 (290 aa).

The homeobox DNA-binding region spans 192–251 (PKRIRTAFSPSQLLRLERAFEKNHYVVGAERKQLAGSLSLSETQVKVWFQNRRTKYKRQK). A disordered region spans residues 249 to 290 (RQKLEEEGPESEQKKKGSHHINRWRIATKQANGEDIDVTSND). Positions 250–263 (QKLEEEGPESEQKK) are enriched in basic and acidic residues.

The protein belongs to the EMX homeobox family. As to quaternary structure, interacts with WRD11 (via the N-terminal and the central portion of the protein); the interaction associates EMX1 with GLI3. Cerebral cortex.

It is found in the nucleus. It localises to the cytoplasm. In terms of biological role, transcription factor, which in cooperation with EMX2, acts to generate the boundary between the roof and archipallium in the developing brain. May function in combinations with OTX1/2 to specify cell fates in the developing central nervous system. The protein is Homeobox protein EMX1 of Homo sapiens (Human).